Reading from the N-terminus, the 368-residue chain is Probable endopolygalacturonase I (368 aa).

Residues 1 to 18 (MHSFQLLGLAALGSLVAA) form the signal peptide. Residues 19 to 31 (APSPSRVSDLTER) constitute a propeptide that is removed on maturation. Cys35 and Cys50 form a disulfide bridge. PbH1 repeat units lie at residues 162 to 192 (ANNL…DISE), 193 to 214 (SNGV…AINS), 215 to 235 (GKNI…SIGS), 244 to 265 (VQGV…RIKT), 273 to 295 (VSDV…VIQQ), and 307 to 328 (SNGI…DSKA). Asp207 functions as the Proton donor in the catalytic mechanism. Cys209 and Cys225 form a disulfide bridge. Residue His229 is part of the active site. 2 disulfide bridges follow: Cys335/Cys340 and Cys359/Cys368.

It belongs to the glycosyl hydrolase 28 family.

The protein localises to the secreted. It catalyses the reaction (1,4-alpha-D-galacturonosyl)n+m + H2O = (1,4-alpha-D-galacturonosyl)n + (1,4-alpha-D-galacturonosyl)m.. Its function is as follows. Involved in maceration and soft-rotting of plant tissue. Hydrolyzes the 1,4-alpha glycosidic bonds of de-esterified pectate in the smooth region of the plant cell wall. This Aspergillus terreus (strain NIH 2624 / FGSC A1156) protein is Probable endopolygalacturonase I (pgaI).